A 407-amino-acid polypeptide reads, in one-letter code: Imidazolonepropionase (407 aa).

His68 and His70 together coordinate Fe(3+). Positions 68 and 70 each coordinate Zn(2+). Residues Arg77, Tyr140, and His173 each contribute to the 4-imidazolone-5-propanoate site. Tyr140 is an N-formimidoyl-L-glutamate binding site. His238 contributes to the Fe(3+) binding site. His238 contacts Zn(2+). Gln241 serves as a coordination point for 4-imidazolone-5-propanoate. Asp313 serves as a coordination point for Fe(3+). Asp313 contacts Zn(2+). Positions 315 and 317 each coordinate N-formimidoyl-L-glutamate. Thr318 serves as a coordination point for 4-imidazolone-5-propanoate.

The protein belongs to the metallo-dependent hydrolases superfamily. HutI family. Requires Zn(2+) as cofactor. Fe(3+) is required as a cofactor.

The protein resides in the cytoplasm. The enzyme catalyses 4-imidazolone-5-propanoate + H2O = N-formimidoyl-L-glutamate. It functions in the pathway amino-acid degradation; L-histidine degradation into L-glutamate; N-formimidoyl-L-glutamate from L-histidine: step 3/3. Catalyzes the hydrolytic cleavage of the carbon-nitrogen bond in imidazolone-5-propanoate to yield N-formimidoyl-L-glutamate. It is the third step in the universal histidine degradation pathway. This Burkholderia ambifaria (strain ATCC BAA-244 / DSM 16087 / CCUG 44356 / LMG 19182 / AMMD) (Burkholderia cepacia (strain AMMD)) protein is Imidazolonepropionase.